A 500-amino-acid polypeptide reads, in one-letter code: Histidine ammonia-lyase (500 aa).

Positions 141–143 (ASG) form a cross-link, 5-imidazolinone (Ala-Gly). Ser142 is subject to 2,3-didehydroalanine (Ser).

The protein belongs to the PAL/histidase family. Contains an active site 4-methylidene-imidazol-5-one (MIO), which is formed autocatalytically by cyclization and dehydration of residues Ala-Ser-Gly.

The protein resides in the cytoplasm. It catalyses the reaction L-histidine = trans-urocanate + NH4(+). Its pathway is amino-acid degradation; L-histidine degradation into L-glutamate; N-formimidoyl-L-glutamate from L-histidine: step 1/3. The polypeptide is Histidine ammonia-lyase (Shouchella clausii (strain KSM-K16) (Alkalihalobacillus clausii)).